Here is an 864-residue protein sequence, read N- to C-terminus: Leukocyte tyrosine kinase receptor (864 aa).

A signal peptide spans 1-16 (MGCWGQLLVWFGAAGA). The Extracellular portion of the chain corresponds to 17–424 (ILCSSPGSQE…CMDLHKPPGP (408 aa)). Over residues 30–40 (RSSPLPLASPS) the composition is skewed to low complexity. The tract at residues 30–64 (RSSPLPLASPSPRDPKVSAPPSILEPASPLNSPGT) is disordered. Intrachain disulfides connect cysteine 73/cysteine 86 and cysteine 168/cysteine 179. The segment at 239-297 (YLRPRDRGRTQASPEKLENRSEAPGSGGRGGAAGGGGGWTSRAPSPQAGRSLQEGAEGG) is disordered. Basic and acidic residues predominate over residues 241-259 (RPRDRGRTQASPEKLENRS). An N-linked (GlcNAc...) asparagine glycan is attached at asparagine 257. The span at 263–277 (GSGGRGGAAGGGGGW) shows a compositional bias: gly residues. The cysteines at positions 300 and 322 are disulfide-linked. Residues asparagine 380 and asparagine 412 are each glycosylated (N-linked (GlcNAc...) asparagine). A helical transmembrane segment spans residues 425–449 (LVLMVAVVATSTLSLLMVCGVLILV). Residues 450 to 864 (KQKKWQGLQE…QNLWNPTYRS (415 aa)) are Cytoplasmic-facing. One can recognise a Protein kinase domain in the interval 510-786 (VTLLRALGHG…LQYCTQDPDV (277 aa)). ATP-binding positions include 516–524 (LGHGAFGEV) and lysine 544. The Proton acceptor role is filled by aspartate 643. At tyrosine 676 the chain carries Phosphotyrosine; by autocatalysis. 2 disordered regions span residues 790 to 830 (LLPM…KLKS) and 842 to 864 (SGLK…TYRS). Residues 852–864 (LQPQNLWNPTYRS) show a composition bias toward polar residues.

It belongs to the protein kinase superfamily. Tyr protein kinase family. Insulin receptor subfamily. As to quaternary structure, homodimer; homodimerizes following ligand-binding. Part of a complex including LTK, TNK2 and GRB2, in which GRB2 promotes LTK recruitment by TNK2. Phosphorylated at tyrosine residues by autocatalysis, which activates kinase activity. As to expression, expressed in non-hematopoietic cell lines and T- and B-cell lines.

It is found in the cell membrane. The enzyme catalyses L-tyrosyl-[protein] + ATP = O-phospho-L-tyrosyl-[protein] + ADP + H(+). With respect to regulation, activated by ligand-binding, leading to homodimerization and autophosphorylation. Receptor with a tyrosine-protein kinase activity. Following activation by ALKAL1 or ALKAL2 ligands at the cell surface, transduces an extracellular signal into an intracellular response. Ligand-binding to the extracellular domain induces tyrosine kinase activation, leading to activation of the mitogen-activated protein kinase (MAPK) pathway. Phosphorylates almost exclusively at the first tyrosine of the Y-x-x-x-Y-Y motif. The exact function of this protein is not known; studies with chimeric proteins demonstrate its ability to promote growth and specifically neurite outgrowth, and cell survival. Involved in regulation of the secretory pathway involving endoplasmic reticulum (ER) export sites (ERESs) and ER to Golgi transport. The chain is Leukocyte tyrosine kinase receptor from Homo sapiens (Human).